Here is a 327-residue protein sequence, read N- to C-terminus: Ubiquinone biosynthesis O-methyltransferase, mitochondrial (327 aa).

Positions 79, 142, 165, and 210 each coordinate S-adenosyl-L-methionine. Residues E211, E214, and H215 each contribute to the Mg(2+) site.

Belongs to the class I-like SAM-binding methyltransferase superfamily. UbiG/COQ3 family. As to quaternary structure, component of a multi-subunit COQ enzyme complex, composed of at least COQ3, COQ4, COQ5, COQ6, COQ7 and COQ9. It depends on Mg(2+) as a cofactor.

Its subcellular location is the mitochondrion inner membrane. The enzyme catalyses a 3,4-dihydroxy-5-(all-trans-polyprenyl)benzoate + S-adenosyl-L-methionine = a 4-hydroxy-3-methoxy-5-(all-trans-polyprenyl)benzoate + S-adenosyl-L-homocysteine + H(+). It carries out the reaction a 3-demethylubiquinone + S-adenosyl-L-methionine = a ubiquinone + S-adenosyl-L-homocysteine. The catalysed reaction is a 3-demethylubiquinol + S-adenosyl-L-methionine = a ubiquinol + S-adenosyl-L-homocysteine + H(+). The protein operates within cofactor biosynthesis; ubiquinone biosynthesis. In terms of biological role, O-methyltransferase required for two non-consecutive steps during ubiquinone biosynthesis. Catalyzes the 2 O-methylation of 3,4-dihydroxy-5-(all-trans-polyprenyl)benzoic acid into 4-hydroxy-3-methoxy-5-(all-trans-polyprenyl)benzoic acid. Also catalyzes the last step of ubiquinone biosynthesis by mediating methylation of 3-demethylubiquinone into ubiquinone. Also able to mediate the methylation of 3-demethylubiquinol into ubiquinol. The protein is Ubiquinone biosynthesis O-methyltransferase, mitochondrial of Candida albicans (Yeast).